Here is a 202-residue protein sequence, read N- to C-terminus: MARYRGPRLRIVRRLGELAGLTRKVPKRSYPPGQHGQARKKRSEYALRLEEKQKLRFNYGVSERQLVRYVRKARRVSGSTGQTLLQLLEMRLDNTVFRLGMAPTIPAARQLVNHGHILVNGRNVSIPSYQCRPGDVITVRDNERSRRLVETNLQNPGLANLPSHLELDKSTLTGRVTGIVERQWVALEVNELLVVEYYSRKV.

An S4 RNA-binding domain is found at M90–N152.

The protein belongs to the universal ribosomal protein uS4 family. Part of the 30S ribosomal subunit. Contacts protein S5. The interaction surface between S4 and S5 is involved in control of translational fidelity.

In terms of biological role, one of the primary rRNA binding proteins, it binds directly to 16S rRNA where it nucleates assembly of the body of the 30S subunit. With S5 and S12 plays an important role in translational accuracy. This chain is Small ribosomal subunit protein uS4, found in Thermosynechococcus vestitus (strain NIES-2133 / IAM M-273 / BP-1).